A 114-amino-acid chain; its full sequence is Hydrogenase maturation factor HypA (114 aa).

His-2 is a Ni(2+) binding site. Positions 70, 73, 86, and 89 each coordinate Zn(2+).

This sequence belongs to the HypA/HybF family.

Involved in the maturation of [NiFe] hydrogenases. Required for nickel insertion into the metal center of the hydrogenase. This chain is Hydrogenase maturation factor HypA, found in Rippkaea orientalis (strain PCC 8801 / RF-1) (Cyanothece sp. (strain PCC 8801)).